We begin with the raw amino-acid sequence, 132 residues long: Large ribosomal subunit protein bL12 (132 aa).

This sequence belongs to the bacterial ribosomal protein bL12 family. As to quaternary structure, homodimer. Part of the ribosomal stalk of the 50S ribosomal subunit. Forms a multimeric L10(L12)X complex, where L10 forms an elongated spine to which 2 to 4 L12 dimers bind in a sequential fashion. Binds GTP-bound translation factors.

Forms part of the ribosomal stalk which helps the ribosome interact with GTP-bound translation factors. Is thus essential for accurate translation. This Ehrlichia canis (strain Jake) protein is Large ribosomal subunit protein bL12.